A 242-amino-acid polypeptide reads, in one-letter code: 2-C-methyl-D-erythritol 4-phosphate cytidylyltransferase (242 aa).

The protein belongs to the IspD/TarI cytidylyltransferase family. IspD subfamily.

It catalyses the reaction 2-C-methyl-D-erythritol 4-phosphate + CTP + H(+) = 4-CDP-2-C-methyl-D-erythritol + diphosphate. It functions in the pathway isoprenoid biosynthesis; isopentenyl diphosphate biosynthesis via DXP pathway; isopentenyl diphosphate from 1-deoxy-D-xylulose 5-phosphate: step 2/6. Its function is as follows. Catalyzes the formation of 4-diphosphocytidyl-2-C-methyl-D-erythritol from CTP and 2-C-methyl-D-erythritol 4-phosphate (MEP). The protein is 2-C-methyl-D-erythritol 4-phosphate cytidylyltransferase of Shewanella loihica (strain ATCC BAA-1088 / PV-4).